Consider the following 186-residue polypeptide: UPF0301 protein Nmul_A2478 (186 aa).

Belongs to the UPF0301 (AlgH) family.

In Nitrosospira multiformis (strain ATCC 25196 / NCIMB 11849 / C 71), this protein is UPF0301 protein Nmul_A2478.